Reading from the N-terminus, the 63-residue chain is Small ribosomal subunit protein eS17 (63 aa).

This sequence belongs to the eukaryotic ribosomal protein eS17 family.

The chain is Small ribosomal subunit protein eS17 from Methanococcus aeolicus (strain ATCC BAA-1280 / DSM 17508 / OCM 812 / Nankai-3).